The primary structure comprises 365 residues: Phosphate acyltransferase (365 aa).

It belongs to the PlsX family. Homodimer. Probably interacts with PlsY.

It localises to the cytoplasm. It carries out the reaction a fatty acyl-[ACP] + phosphate = an acyl phosphate + holo-[ACP]. The protein operates within lipid metabolism; phospholipid metabolism. Catalyzes the reversible formation of acyl-phosphate (acyl-PO(4)) from acyl-[acyl-carrier-protein] (acyl-ACP). This enzyme utilizes acyl-ACP as fatty acyl donor, but not acyl-CoA. This chain is Phosphate acyltransferase, found in Klebsiella pneumoniae (strain 342).